Reading from the N-terminus, the 155-residue chain is Large ribosomal subunit protein uL22c (155 aa).

It belongs to the universal ribosomal protein uL22 family. Part of the 50S ribosomal subunit.

It is found in the plastid. The protein resides in the chloroplast. Functionally, this protein binds specifically to 23S rRNA. Its function is as follows. The globular domain of the protein is located near the polypeptide exit tunnel on the outside of the subunit, while an extended beta-hairpin is found that lines the wall of the exit tunnel in the center of the 70S ribosome. This is Large ribosomal subunit protein uL22c (rpl22) from Atropa belladonna (Belladonna).